A 458-amino-acid polypeptide reads, in one-letter code: Exodeoxyribonuclease 7 large subunit (458 aa).

Belongs to the XseA family. In terms of assembly, heterooligomer composed of large and small subunits.

The protein resides in the cytoplasm. The enzyme catalyses Exonucleolytic cleavage in either 5'- to 3'- or 3'- to 5'-direction to yield nucleoside 5'-phosphates.. Bidirectionally degrades single-stranded DNA into large acid-insoluble oligonucleotides, which are then degraded further into small acid-soluble oligonucleotides. The chain is Exodeoxyribonuclease 7 large subunit from Escherichia coli (strain UTI89 / UPEC).